The primary structure comprises 151 residues: Probable cGMP 3',5'-cyclic phosphodiesterase subunit delta (151 aa).

It belongs to the PDE6D/unc-119 family. Interacts with Pde6.

It localises to the nucleus. The protein resides in the cytoplasm. This Drosophila simulans (Fruit fly) protein is Probable cGMP 3',5'-cyclic phosphodiesterase subunit delta.